The following is a 349-amino-acid chain: Twinfilin-2 (349 aa).

Position 2 is an N-acetylalanine (A2). 2 consecutive ADF-H domains span residues 4–139 (QTGI…KHLS) and 177–313 (GLAF…DEVH). K14 bears the N6-acetyllysine mark. Y309 carries the phosphotyrosine modification. The tract at residues 322–349 (AFAKPKGPGGKRGHKRLIRGPGENGDDS) is disordered. The segment covering 330–339 (GGKRGHKRLI) has biased composition (basic residues). Phosphoserine is present on S349.

This sequence belongs to the actin-binding proteins ADF family. Twinfilin subfamily. In terms of assembly, interacts with G-actin; ADP-actin form and capping protein (CP). May also be able to interact with TWF1 and phosphoinositides, PI(4,5)P2. When bound to PI(4,5)P2, it is down-regulated. Interacts with MYO7A. In vitro, phosphorylated by PRKCZ, CK2 and SRC. Ubiquitously expressed (at protein level).

It localises to the cytoplasm. The protein localises to the cytoskeleton. It is found in the perinuclear region. The protein resides in the cell projection. Its subcellular location is the stereocilium. Actin-binding protein involved in motile and morphological processes. Inhibits actin polymerization, likely by sequestering G-actin. By capping the barbed ends of filaments, it also regulates motility. Seems to play an important role in clathrin-mediated endocytosis and distribution of endocytic organelles. May play a role in regulating the mature length of the middle and short rows of stereocilia. The polypeptide is Twinfilin-2 (TWF2) (Homo sapiens (Human)).